We begin with the raw amino-acid sequence, 455 residues long: Tubby-like F-box protein 1 (455 aa).

The region spanning 54-112 is the F-box domain; the sequence is ETPWANLPPELLRDVIKRLEESESVWPARRHVVACASVCRSWRDMCKEIVQSPELSGKI. The disordered stretch occupies residues 386–414; that stretch reads QPQPQPQPQPQPQPLTQPQPSGQTDGPDK. Over residues 388–402 the composition is skewed to pro residues; that stretch reads QPQPQPQPQPQPLTQ.

It belongs to the TUB family. As to expression, ubiquitous.

The sequence is that of Tubby-like F-box protein 1 from Arabidopsis thaliana (Mouse-ear cress).